Here is a 211-residue protein sequence, read N- to C-terminus: Protein-L-isoaspartate O-methyltransferase (211 aa).

The active site involves serine 60.

It belongs to the methyltransferase superfamily. L-isoaspartyl/D-aspartyl protein methyltransferase family.

The protein resides in the cytoplasm. The catalysed reaction is [protein]-L-isoaspartate + S-adenosyl-L-methionine = [protein]-L-isoaspartate alpha-methyl ester + S-adenosyl-L-homocysteine. In terms of biological role, catalyzes the methyl esterification of L-isoaspartyl residues in peptides and proteins that result from spontaneous decomposition of normal L-aspartyl and L-asparaginyl residues. It plays a role in the repair and/or degradation of damaged proteins. The protein is Protein-L-isoaspartate O-methyltransferase of Alteromonas mediterranea (strain DSM 17117 / CIP 110805 / LMG 28347 / Deep ecotype).